A 414-amino-acid polypeptide reads, in one-letter code: Argininosuccinate synthase (414 aa).

12–20 (AYSGGLDTS) serves as a coordination point for ATP. L-citrulline contacts are provided by Y90 and S95. G120 is a binding site for ATP. Residues T122, N126, and D127 each coordinate L-aspartate. L-citrulline is bound at residue N126. L-citrulline is bound by residues R130, S179, S188, E264, and Y276.

This sequence belongs to the argininosuccinate synthase family. Type 1 subfamily. As to quaternary structure, homotetramer.

It localises to the cytoplasm. The enzyme catalyses L-citrulline + L-aspartate + ATP = 2-(N(omega)-L-arginino)succinate + AMP + diphosphate + H(+). Its pathway is amino-acid biosynthesis; L-arginine biosynthesis; L-arginine from L-ornithine and carbamoyl phosphate: step 2/3. The chain is Argininosuccinate synthase from Alkaliphilus metalliredigens (strain QYMF).